Reading from the N-terminus, the 319-residue chain is Glutathione synthetase (319 aa).

The 186-residue stretch at 129–314 (KLAILNFSRF…VAAMFADAVA (186 aa)) folds into the ATP-grasp domain. 155–211 (LKEHGDIIIKPLDGMGGMGIFRLTEKDPNIGSILETLMQLDSRTIMAQRYIPEIVHG) contributes to the ATP binding site. Residues E285 and N287 each contribute to the Mg(2+) site.

Belongs to the prokaryotic GSH synthase family. Mg(2+) is required as a cofactor. Mn(2+) serves as cofactor.

It carries out the reaction gamma-L-glutamyl-L-cysteine + glycine + ATP = glutathione + ADP + phosphate + H(+). It functions in the pathway sulfur metabolism; glutathione biosynthesis; glutathione from L-cysteine and L-glutamate: step 2/2. This chain is Glutathione synthetase, found in Neisseria meningitidis serogroup B (strain ATCC BAA-335 / MC58).